The sequence spans 226 residues: Leucyl/phenylalanyl-tRNA--protein transferase (226 aa).

Belongs to the L/F-transferase family.

The protein resides in the cytoplasm. The enzyme catalyses N-terminal L-lysyl-[protein] + L-leucyl-tRNA(Leu) = N-terminal L-leucyl-L-lysyl-[protein] + tRNA(Leu) + H(+). It carries out the reaction N-terminal L-arginyl-[protein] + L-leucyl-tRNA(Leu) = N-terminal L-leucyl-L-arginyl-[protein] + tRNA(Leu) + H(+). It catalyses the reaction L-phenylalanyl-tRNA(Phe) + an N-terminal L-alpha-aminoacyl-[protein] = an N-terminal L-phenylalanyl-L-alpha-aminoacyl-[protein] + tRNA(Phe). Functions in the N-end rule pathway of protein degradation where it conjugates Leu, Phe and, less efficiently, Met from aminoacyl-tRNAs to the N-termini of proteins containing an N-terminal arginine or lysine. In Pseudomonas fluorescens (strain Pf0-1), this protein is Leucyl/phenylalanyl-tRNA--protein transferase.